The chain runs to 371 residues: MYNESPIIRRPSTRIYVGDVPIGDGAPIAVQSMTNTRTTDVEATVAQIRALENVGADIVRVSVPTMDAAEAFKVIKQQTKVPLVADIHFDYRIALKVAEYGVDCLRINPGNIGNEERIRSVVECARDKNIPIRIGVNGGSLEKDLMDKYKEPTPQALLESAMRHVDILDRLNFDQFKVSVKASDVFLAVESYRLLAKQIKQPLHLGITEAGGARAGAVKSAVGLGMLLAEGIGDTLRISLAADPVEEIKVGFDILKSLRIRSRGINFIACPSCSRQEFDVIATVNELERRLEDVVTPMDVSIIGCVVNGPGEALVSDIGLTGGNRKSGYYDDGVRQKERFDNEHIVDQLEAKIRAKVASVDARIPTTDITE.

4 residues coordinate [4Fe-4S] cluster: Cys270, Cys273, Cys305, and Glu312.

Belongs to the IspG family. Requires [4Fe-4S] cluster as cofactor.

It carries out the reaction (2E)-4-hydroxy-3-methylbut-2-enyl diphosphate + oxidized [flavodoxin] + H2O + 2 H(+) = 2-C-methyl-D-erythritol 2,4-cyclic diphosphate + reduced [flavodoxin]. The protein operates within isoprenoid biosynthesis; isopentenyl diphosphate biosynthesis via DXP pathway; isopentenyl diphosphate from 1-deoxy-D-xylulose 5-phosphate: step 5/6. Converts 2C-methyl-D-erythritol 2,4-cyclodiphosphate (ME-2,4cPP) into 1-hydroxy-2-methyl-2-(E)-butenyl 4-diphosphate. The chain is 4-hydroxy-3-methylbut-2-en-1-yl diphosphate synthase (flavodoxin) from Shewanella loihica (strain ATCC BAA-1088 / PV-4).